The sequence spans 369 residues: GTPase Obg (369 aa).

Residues methionine 1–leucine 159 enclose the Obg domain. The tract at residues leucine 128–glycine 147 is disordered. The OBG-type G domain maps to alanine 160 to alanine 334. GTP is bound by residues glycine 166 to serine 173, phenylalanine 191 to alanine 195, aspartate 213 to glycine 216, asparagine 284 to aspartate 287, and serine 315 to leucine 317. Residues serine 173 and threonine 193 each coordinate Mg(2+).

It belongs to the TRAFAC class OBG-HflX-like GTPase superfamily. OBG GTPase family. Monomer. It depends on Mg(2+) as a cofactor.

Its subcellular location is the cytoplasm. In terms of biological role, an essential GTPase which binds GTP, GDP and possibly (p)ppGpp with moderate affinity, with high nucleotide exchange rates and a fairly low GTP hydrolysis rate. Plays a role in control of the cell cycle, stress response, ribosome biogenesis and in those bacteria that undergo differentiation, in morphogenesis control. This is GTPase Obg from Burkholderia multivorans (strain ATCC 17616 / 249).